The chain runs to 212 residues: 3-isopropylmalate dehydratase small subunit (212 aa).

It belongs to the LeuD family. LeuD type 1 subfamily. Heterodimer of LeuC and LeuD.

The enzyme catalyses (2R,3S)-3-isopropylmalate = (2S)-2-isopropylmalate. It functions in the pathway amino-acid biosynthesis; L-leucine biosynthesis; L-leucine from 3-methyl-2-oxobutanoate: step 2/4. Functionally, catalyzes the isomerization between 2-isopropylmalate and 3-isopropylmalate, via the formation of 2-isopropylmaleate. The chain is 3-isopropylmalate dehydratase small subunit from Thioalkalivibrio sulfidiphilus (strain HL-EbGR7).